A 76-amino-acid chain; its full sequence is CLAVATA3/ESR (CLE)-related protein 46 (76 aa).

Residues 1–26 (MRRHDIIIKLLLLMCLLLSRFVTREC) form the signal peptide. The segment at 53-76 (EEKKWHKHPSGPNPTGNRHPPVKH) is disordered. Pro-61 and Pro-64 each carry hydroxyproline. A glycan (O-linked (Ara...) hydroxyproline) is linked at Pro-64.

The protein belongs to the CLV3/ESR signal peptide family. The O-glycosylation (arabinosylation) of the hydroxyproline Pro-64 enhances binding affinity of the CLE46p peptide for its receptor.

The protein resides in the secreted. The protein localises to the extracellular space. In terms of biological role, extracellular signal peptide that regulates cell fate. The polypeptide is CLAVATA3/ESR (CLE)-related protein 46 (Arabidopsis thaliana (Mouse-ear cress)).